Consider the following 369-residue polypeptide: Ribosomal RNA large subunit methyltransferase G (369 aa).

It belongs to the methyltransferase superfamily. RlmG family.

It is found in the cytoplasm. It catalyses the reaction guanosine(1835) in 23S rRNA + S-adenosyl-L-methionine = N(2)-methylguanosine(1835) in 23S rRNA + S-adenosyl-L-homocysteine + H(+). Specifically methylates the guanine in position 1835 (m2G1835) of 23S rRNA. This is Ribosomal RNA large subunit methyltransferase G from Magnetococcus marinus (strain ATCC BAA-1437 / JCM 17883 / MC-1).